We begin with the raw amino-acid sequence, 482 residues long: Ribosomal RNA small subunit methyltransferase F (482 aa).

S-adenosyl-L-methionine is bound by residues 119–125 (ASAPGSK), E143, D170, and D188. Catalysis depends on C241, which acts as the Nucleophile.

This sequence belongs to the class I-like SAM-binding methyltransferase superfamily. RsmB/NOP family.

The protein localises to the cytoplasm. The enzyme catalyses cytidine(1407) in 16S rRNA + S-adenosyl-L-methionine = 5-methylcytidine(1407) in 16S rRNA + S-adenosyl-L-homocysteine + H(+). Functionally, specifically methylates the cytosine at position 1407 (m5C1407) of 16S rRNA. This chain is Ribosomal RNA small subunit methyltransferase F, found in Shewanella sp. (strain ANA-3).